The following is a 242-amino-acid chain: Small ribosomal subunit protein uS2 (242 aa).

It belongs to the universal ribosomal protein uS2 family.

In Shewanella putrefaciens (strain CN-32 / ATCC BAA-453), this protein is Small ribosomal subunit protein uS2.